Consider the following 203-residue polypeptide: Acid phosphatase (203 aa).

Catalysis depends on His13, which acts as the Tele-phosphohistidine intermediate. The Proton donor/acceptor role is filled by Glu85.

It belongs to the phosphoglycerate mutase family. In terms of assembly, homodimer.

It carries out the reaction a phosphate monoester + H2O = an alcohol + phosphate. The enzyme catalyses beta-D-fructose 1,6-bisphosphate + H2O = beta-D-fructose 6-phosphate + phosphate. It participates in carbohydrate biosynthesis; gluconeogenesis. In contrast to classical FBPases, is resistant to inhibition by lithium. Phosphatase with a broad specificity. Can dephosphorylate a variety of substrates including phosphorylated sugars like fructose-6-phosphate (F6P). Is able to function in vivo as a fructose-1,6-bisphosphatase (FBPase) and to maintain gluconeogenesis when the classical FBPase GlpX is absent. Shows negligible phosphoglycerate mutase activity. Has no phosphatase activity against 3-phosphoglycerate, 2,3-bisphosphoglycerate, or hydrophobic substrates such as alpha-napthyl phosphate. This Mycobacterium tuberculosis (strain ATCC 25618 / H37Rv) protein is Acid phosphatase.